A 181-amino-acid polypeptide reads, in one-letter code: MCKGLAALPHSCLERAKEIKIKLGILLQKPDSAVDLVIPYNEKPEKPAKAHKPSLEEVLQWRQSLDKLLQNSYGFASFKSFLKSEFSEENLEFWVACENYKKIKSPIKMAEKAKQIYEEFIQTEAPKEVNIDHFTKDITMKNLVEPSPRSFDLAQKRIYALMEKDSLPRFVRSEFYKELIK.

Residues 64–180 (SLDKLLQNSY…VRSEFYKELI (117 aa)) enclose the RGS domain.

As to expression, expressed in heart and muscle.

It is found in the cytoplasm. The protein localises to the membrane. Its function is as follows. Inhibits signal transduction by increasing the GTPase activity of G protein alpha subunits thereby driving them into their inactive GDP-bound form. Binds to G(i)-alpha and G(o)-alpha, but not to G(s)-alpha. The polypeptide is Regulator of G-protein signaling 5 (Rgs5) (Mus musculus (Mouse)).